An 840-amino-acid polypeptide reads, in one-letter code: Protein translocase subunit SecA (840 aa).

ATP contacts are provided by residues Gln87, 105–109, and Asp494; that span reads GEGKT. Residues 518–537 form a disordered region; that stretch reads RRIDNQLRGRSGRQGDPGSS. 4 residues coordinate Zn(2+): Cys826, Cys828, Cys837, and Cys838.

The protein belongs to the SecA family. Monomer and homodimer. Part of the essential Sec protein translocation apparatus which comprises SecA, SecYEG and auxiliary proteins SecDF-YajC and YidC. Requires Zn(2+) as cofactor.

It localises to the cell inner membrane. It is found in the cytoplasm. The catalysed reaction is ATP + H2O + cellular proteinSide 1 = ADP + phosphate + cellular proteinSide 2.. Its function is as follows. Part of the Sec protein translocase complex. Interacts with the SecYEG preprotein conducting channel. Has a central role in coupling the hydrolysis of ATP to the transfer of proteins into and across the cell membrane, serving as an ATP-driven molecular motor driving the stepwise translocation of polypeptide chains across the membrane. This chain is Protein translocase subunit SecA, found in Desulforapulum autotrophicum (strain ATCC 43914 / DSM 3382 / VKM B-1955 / HRM2) (Desulfobacterium autotrophicum).